Consider the following 250-residue polypeptide: Putative inactive flavonol synthase 2 (250 aa).

Residues Thr171–Ala250 form the Fe2OG dioxygenase domain. Residues His195 and Asp197 each coordinate Fe cation.

It belongs to the iron/ascorbate-dependent oxidoreductase family.

In Arabidopsis thaliana (Mouse-ear cress), this protein is Putative inactive flavonol synthase 2 (FLS2).